We begin with the raw amino-acid sequence, 426 residues long: 4-aminobutyrate aminotransferase GabT (426 aa).

Residues 111 to 112 and Q242 each bind pyridoxal 5'-phosphate; that span reads GS. The residue at position 268 (K268) is an N6-(pyridoxal phosphate)lysine. Pyridoxal 5'-phosphate is bound at residue T297.

It belongs to the class-III pyridoxal-phosphate-dependent aminotransferase family. In terms of assembly, homotetramer. Pyridoxal 5'-phosphate serves as cofactor.

It carries out the reaction 4-aminobutanoate + 2-oxoglutarate = succinate semialdehyde + L-glutamate. The enzyme catalyses 5-aminopentanoate + 2-oxoglutarate = 5-oxopentanoate + L-glutamate. It functions in the pathway amino-acid degradation; 4-aminobutanoate degradation. It participates in amino-acid degradation. Functionally, pyridoxal phosphate-dependent enzyme that catalyzes transamination between primary amines and alpha-keto acids. Catalyzes the transfer of the amino group from gamma-aminobutyrate (GABA) to alpha-ketoglutarate (KG) to yield succinic semialdehyde (SSA) and glutamate. Thereby functions in a GABA degradation pathway that allows some E.coli strains to utilize GABA as a nitrogen source for growth. Also catalyzes the conversion of 5-aminovalerate to glutarate semialdehyde, as part of a L-lysine degradation pathway that proceeds via cadaverine, glutarate and L-2-hydroxyglutarate. This is 4-aminobutyrate aminotransferase GabT (gabT) from Escherichia coli (strain K12).